The sequence spans 601 residues: A-type ATP synthase subunit A (601 aa).

236–243 (GPFGSGKT) contacts ATP.

It belongs to the ATPase alpha/beta chains family. In terms of assembly, has multiple subunits with at least A(3), B(3), C, D, E, F, H, I and proteolipid K(x).

It is found in the cell membrane. The enzyme catalyses ATP + H2O + 4 H(+)(in) = ADP + phosphate + 5 H(+)(out). Its function is as follows. Component of the A-type ATP synthase that produces ATP from ADP in the presence of a proton gradient across the membrane. The A chain is the catalytic subunit. In Hyperthermus butylicus (strain DSM 5456 / JCM 9403 / PLM1-5), this protein is A-type ATP synthase subunit A.